A 374-amino-acid polypeptide reads, in one-letter code: Low-specificity L-threonine aldolase (374 aa).

Lys-213 is modified (N6-(pyridoxal phosphate)lysine). A disordered region spans residues 354-374 (HPHKDDGRNNKKMYSLDAIKK).

Belongs to the threonine aldolase family. Homotetramer. Pyridoxal 5'-phosphate serves as cofactor.

It catalyses the reaction L-threonine = acetaldehyde + glycine. It carries out the reaction L-allo-threonine = acetaldehyde + glycine. The protein operates within amino-acid degradation; L-threonine degradation via aldolase pathway; acetaldehyde and glycine from L-threonine: step 1/1. The protein is Low-specificity L-threonine aldolase (GLY1) of Candida albicans (Yeast).